The chain runs to 110 residues: MKKMFRSLIRHCLKPELDKLRECEERLSVIEKQKQSSKQESEETYIHIETLNVEKVDYHLEFGELTIDELSGRLNIGATYYIPPEEKDKKCQRKPEAPSTPAVTIRSKRQ.

Residues 16–46 adopt a coiled-coil conformation; the sequence is ELDKLRECEERLSVIEKQKQSSKQESEETYI. Over residues 85–96 the composition is skewed to basic and acidic residues; sequence EEKDKKCQRKPE. Residues 85–110 are disordered; that stretch reads EEKDKKCQRKPEAPSTPAVTIRSKRQ.

This is an uncharacterized protein from Bacillus subtilis (strain 168).